The chain runs to 216 residues: MKGKFIVFEGVDGSGKTTQIKLLGEKLESMGCPVVYTREPGGTRVGERIREILLNPLYGELVPWAEALLYAAARAQHVAQVILPALREGKVVLCDRFTDSSLAYQGYGRGVDIEMLEQVNRPAAAGVVPDLVLVLDFDREGQTERMARSGRSADRIEREAQEFYRRVRSGYLALAARAPRRYRVIDASRAEKLVHLDVLKAAEEVLDAFLKGNSRA.

10 to 17 (GVDGSGKT) provides a ligand contact to ATP.

The protein belongs to the thymidylate kinase family.

It carries out the reaction dTMP + ATP = dTDP + ADP. Its function is as follows. Phosphorylation of dTMP to form dTDP in both de novo and salvage pathways of dTTP synthesis. The polypeptide is Thymidylate kinase (Pelotomaculum thermopropionicum (strain DSM 13744 / JCM 10971 / SI)).